The primary structure comprises 319 residues: Acetyl-coenzyme A carboxylase carboxyl transferase subunit alpha (319 aa).

One can recognise a CoA carboxyltransferase C-terminal domain in the interval 35 to 296; the sequence is NIDEEVQRLR…KTQLLADLED (262 aa).

This sequence belongs to the AccA family. As to quaternary structure, acetyl-CoA carboxylase is a heterohexamer composed of biotin carboxyl carrier protein (AccB), biotin carboxylase (AccC) and two subunits each of ACCase subunit alpha (AccA) and ACCase subunit beta (AccD).

It is found in the cytoplasm. It carries out the reaction N(6)-carboxybiotinyl-L-lysyl-[protein] + acetyl-CoA = N(6)-biotinyl-L-lysyl-[protein] + malonyl-CoA. Its pathway is lipid metabolism; malonyl-CoA biosynthesis; malonyl-CoA from acetyl-CoA: step 1/1. In terms of biological role, component of the acetyl coenzyme A carboxylase (ACC) complex. First, biotin carboxylase catalyzes the carboxylation of biotin on its carrier protein (BCCP) and then the CO(2) group is transferred by the carboxyltransferase to acetyl-CoA to form malonyl-CoA. The protein is Acetyl-coenzyme A carboxylase carboxyl transferase subunit alpha of Edwardsiella ictaluri (strain 93-146).